The primary structure comprises 241 residues: Ribonuclease 3 (241 aa).

The RNase III domain maps to 8–137; it reads LTLLKNRLGI…LLGAVYLDQG (130 aa). Residue Glu-50 coordinates Mg(2+). The active site involves Asp-54. Mg(2+) contacts are provided by Asp-123 and Glu-126. Glu-126 is an active-site residue. The DRBM domain occupies 164–233; sequence DYKTELQELV…AKKALMKSDL (70 aa). Residues 214–241 are disordered; sequence RSKKEAEQQAAKKALMKSDLGSACNHKK.

It belongs to the ribonuclease III family. Homodimer. Mg(2+) serves as cofactor.

Its subcellular location is the cytoplasm. It carries out the reaction Endonucleolytic cleavage to 5'-phosphomonoester.. In terms of biological role, digests double-stranded RNA. Involved in the processing of primary rRNA transcript to yield the immediate precursors to the large and small rRNAs (23S and 16S). Processes some mRNAs, and tRNAs when they are encoded in the rRNA operon. Processes pre-crRNA and tracrRNA of type II CRISPR loci if present in the organism. The chain is Ribonuclease 3 from Pelotomaculum thermopropionicum (strain DSM 13744 / JCM 10971 / SI).